Consider the following 381-residue polypeptide: Succinyl-diaminopimelate desuccinylase (381 aa).

H71 serves as a coordination point for Zn(2+). The active site involves D73. Position 104 (D104) interacts with Zn(2+). The active-site Proton acceptor is the E138. Zn(2+) contacts are provided by E139, E167, and H353.

This sequence belongs to the peptidase M20A family. DapE subfamily. Homodimer. Requires Zn(2+) as cofactor. Co(2+) serves as cofactor.

It catalyses the reaction N-succinyl-(2S,6S)-2,6-diaminopimelate + H2O = (2S,6S)-2,6-diaminopimelate + succinate. Its pathway is amino-acid biosynthesis; L-lysine biosynthesis via DAP pathway; LL-2,6-diaminopimelate from (S)-tetrahydrodipicolinate (succinylase route): step 3/3. In terms of biological role, catalyzes the hydrolysis of N-succinyl-L,L-diaminopimelic acid (SDAP), forming succinate and LL-2,6-diaminopimelate (DAP), an intermediate involved in the bacterial biosynthesis of lysine and meso-diaminopimelic acid, an essential component of bacterial cell walls. The protein is Succinyl-diaminopimelate desuccinylase of Shewanella halifaxensis (strain HAW-EB4).